We begin with the raw amino-acid sequence, 231 residues long: Cytochrome c oxidase subunit 2 (231 aa).

Residues 1–30 (MNNFFQGYNLLFQHSLFASYMDWFHSFNCS) lie on the Mitochondrial intermembrane side of the membrane. A helical transmembrane segment spans residues 31–52 (LLLGVLVFVTLLFGYLIFGTFY). The Mitochondrial matrix portion of the chain corresponds to 53 to 69 (FKSKKIEYQFGELLCSI). A helical transmembrane segment spans residues 70–89 (FPTIILLMQMVPSLSLLYYY). Over 90-231 (GLMNLDSNLT…FKSWCFGTME (142 aa)) the chain is Mitochondrial intermembrane. Cu cation is bound by residues H164, C199, E201, C203, H207, and M210. E201 contacts Mg(2+).

This sequence belongs to the cytochrome c oxidase subunit 2 family. In terms of assembly, component of the cytochrome c oxidase (complex IV, CIV), a multisubunit enzyme composed of a catalytic core of 3 subunits and several supernumerary subunits. The complex exists as a monomer or a dimer and forms supercomplexes (SCs) in the inner mitochondrial membrane with ubiquinol-cytochrome c oxidoreductase (cytochrome b-c1 complex, complex III, CIII). Cu cation is required as a cofactor.

The protein resides in the mitochondrion inner membrane. The catalysed reaction is 4 Fe(II)-[cytochrome c] + O2 + 8 H(+)(in) = 4 Fe(III)-[cytochrome c] + 2 H2O + 4 H(+)(out). Functionally, component of the cytochrome c oxidase, the last enzyme in the mitochondrial electron transport chain which drives oxidative phosphorylation. The respiratory chain contains 3 multisubunit complexes succinate dehydrogenase (complex II, CII), ubiquinol-cytochrome c oxidoreductase (cytochrome b-c1 complex, complex III, CIII) and cytochrome c oxidase (complex IV, CIV), that cooperate to transfer electrons derived from NADH and succinate to molecular oxygen, creating an electrochemical gradient over the inner membrane that drives transmembrane transport and the ATP synthase. Cytochrome c oxidase is the component of the respiratory chain that catalyzes the reduction of oxygen to water. Electrons originating from reduced cytochrome c in the intermembrane space (IMS) are transferred via the dinuclear copper A center (CU(A)) of subunit 2 and heme A of subunit 1 to the active site in subunit 1, a binuclear center (BNC) formed by heme A3 and copper B (CU(B)). The BNC reduces molecular oxygen to 2 water molecules using 4 electrons from cytochrome c in the IMS and 4 protons from the mitochondrial matrix. In Caenorhabditis elegans, this protein is Cytochrome c oxidase subunit 2.